The chain runs to 648 residues: FAD-binding monooxygenase trt3 (648 aa).

Residues 118–121 (TWYW), 130–131 (DI), and Y136 each bind FAD. 128–130 (MCD) provides a ligand contact to NADP(+). NADP(+)-binding positions include 274 to 280 (TGSTAVQ) and 297 to 298 (RT).

It belongs to the FAD-binding monooxygenase family. FAD is required as a cofactor.

Its pathway is secondary metabolite biosynthesis; terpenoid biosynthesis. FAD-binding monooxygenase; part of the gene cluster that mediates the biosynthesis of terretonin, a fungal meroterpenoid that acts as a mycotoxin. The first step of the pathway is the synthesis of 3,5-dimethylorsellinic acid (DMOA) by the polyketide synthase trt4. DMOA is then prenylated into farnesyl-DMOA by the polyprenyl transferase trt2. Methylation by the methyltransferase trt5 then leads to farnesyl-DMOA methyl ester which is further subject to epoxidation by the FAD-dependent monooxygenase trt8 to yield epoxyfarnesyl-DMOA methyl ester. Cyclization of epoxyfarnesyl-DMOA methyl ester by the terpene cyclase trt1 leads to a tetracycle intermediate which is in turn converted to preterretonin. Dehydrogenase trt9 comes next to transform preterretonin to preterrenoid. The FAD-dependent monooxygenase trt3 is then required for the C-hydroxylation at C16 of preterrenoid to yield terrenoid. The cytochrome P450 trt6 catalyzes three successive oxidations to transform terrenoid into an unstable intermediate, which then undergoes the D-ring expansion and unusual rearrangement of the methoxy group to afford the core skeleton of terretonin. Trt14 catalyzes the D-ring expansion of terretonin involving intramolecular methoxy rearrangement as well as the hydrolysis of the expanded D-ring and the methyl ester moiety. Finally, the nonheme iron-dependent dioxygenase trt7 accomplishes the last two oxidation reactions steps to complete the biosynthesis of terretonin. Terretonin C is produced via spontaneous decarboxylation of the terretonin precursor. Another shunt product of the terretonin biosynthesis is dihydrofarnesyl-DMOA, derived from epoxyfarnesyl-DMOA through hydrolysis of the epoxide. The protein is FAD-binding monooxygenase trt3 of Aspergillus terreus (strain NIH 2624 / FGSC A1156).